We begin with the raw amino-acid sequence, 308 residues long: Ycf92-like protein (308 aa).

The next 5 membrane-spanning stretches (helical) occupy residues 41-61 (FANN…TLIA), 75-95 (LLTL…GLGV), 153-173 (ISTI…TTAP), 192-212 (IPVT…PLVL), and 288-308 (WLAI…GNQI).

The protein belongs to the ycf92 family.

It localises to the membrane. The polypeptide is Ycf92-like protein (Nostoc sp. (strain PCC 7120 / SAG 25.82 / UTEX 2576)).